Here is a 460-residue protein sequence, read N- to C-terminus: ATP synthase subunit beta (460 aa).

150 to 157 (GGAGVGKT) is an ATP binding site.

It belongs to the ATPase alpha/beta chains family. As to quaternary structure, F-type ATPases have 2 components, CF(1) - the catalytic core - and CF(0) - the membrane proton channel. CF(1) has five subunits: alpha(3), beta(3), gamma(1), delta(1), epsilon(1). CF(0) has three main subunits: a(1), b(2) and c(9-12). The alpha and beta chains form an alternating ring which encloses part of the gamma chain. CF(1) is attached to CF(0) by a central stalk formed by the gamma and epsilon chains, while a peripheral stalk is formed by the delta and b chains.

The protein resides in the cell inner membrane. The enzyme catalyses ATP + H2O + 4 H(+)(in) = ADP + phosphate + 5 H(+)(out). In terms of biological role, produces ATP from ADP in the presence of a proton gradient across the membrane. The catalytic sites are hosted primarily by the beta subunits. This Photorhabdus laumondii subsp. laumondii (strain DSM 15139 / CIP 105565 / TT01) (Photorhabdus luminescens subsp. laumondii) protein is ATP synthase subunit beta.